Reading from the N-terminus, the 130-residue chain is uncharacterized protein (130 aa).

Residues 19 to 73 (IYSLRLAKGLSRQQLAEVIDVTHQQLQKYEKAINRISVGRLVLIAEALDRNIDYF) form the HTH cro/C1-type domain. The segment at residues 30-49 (RQQLAEVIDVTHQQLQKYEK) is a DNA-binding region (H-T-H motif).

This is an uncharacterized protein from Rickettsia prowazekii (strain Madrid E).